The primary structure comprises 652 residues: DNA ligase (652 aa).

Residues Asp29–Asp33, Ser78–Leu79, and Glu107 each bind NAD(+). The active-site N6-AMP-lysine intermediate is the Lys109. NAD(+) is bound by residues Arg130, Glu164, Lys278, and Lys302. Zn(2+) is bound by residues Cys395, Cys398, Cys413, and Cys418. Residues Asp577–Leu652 enclose the BRCT domain.

Belongs to the NAD-dependent DNA ligase family. LigA subfamily. Mg(2+) serves as cofactor. It depends on Mn(2+) as a cofactor.

The enzyme catalyses NAD(+) + (deoxyribonucleotide)n-3'-hydroxyl + 5'-phospho-(deoxyribonucleotide)m = (deoxyribonucleotide)n+m + AMP + beta-nicotinamide D-nucleotide.. DNA ligase that catalyzes the formation of phosphodiester linkages between 5'-phosphoryl and 3'-hydroxyl groups in double-stranded DNA using NAD as a coenzyme and as the energy source for the reaction. It is essential for DNA replication and repair of damaged DNA. The sequence is that of DNA ligase from Streptococcus equi subsp. zooepidemicus (strain MGCS10565).